Reading from the N-terminus, the 262-residue chain is Tryptophan synthase alpha chain (262 aa).

Residues glutamate 48 and aspartate 59 each act as proton acceptor in the active site.

It belongs to the TrpA family. Tetramer of two alpha and two beta chains.

It carries out the reaction (1S,2R)-1-C-(indol-3-yl)glycerol 3-phosphate + L-serine = D-glyceraldehyde 3-phosphate + L-tryptophan + H2O. It functions in the pathway amino-acid biosynthesis; L-tryptophan biosynthesis; L-tryptophan from chorismate: step 5/5. The alpha subunit is responsible for the aldol cleavage of indoleglycerol phosphate to indole and glyceraldehyde 3-phosphate. The sequence is that of Tryptophan synthase alpha chain from Helicobacter pylori (strain ATCC 700392 / 26695) (Campylobacter pylori).